A 373-amino-acid polypeptide reads, in one-letter code: tRNA-specific 2-thiouridylase MnmA (373 aa).

ATP-binding positions include 12 to 19 (GMSGGVDS) and Met-38. Residues 98 to 100 (NPD) form an interaction with target base in tRNA region. Catalysis depends on Cys-103, which acts as the Nucleophile. A disulfide bridge connects residues Cys-103 and Cys-200. Gly-127 serves as a coordination point for ATP. An interaction with tRNA region spans residues 150–152 (KDQ). Residue Cys-200 is the Cysteine persulfide intermediate of the active site. The interaction with tRNA stretch occupies residues 312 to 313 (RY).

It belongs to the MnmA/TRMU family.

It is found in the cytoplasm. The catalysed reaction is S-sulfanyl-L-cysteinyl-[protein] + uridine(34) in tRNA + AH2 + ATP = 2-thiouridine(34) in tRNA + L-cysteinyl-[protein] + A + AMP + diphosphate + H(+). In terms of biological role, catalyzes the 2-thiolation of uridine at the wobble position (U34) of tRNA, leading to the formation of s(2)U34. This chain is tRNA-specific 2-thiouridylase MnmA, found in Streptococcus pneumoniae serotype 19F (strain G54).